The primary structure comprises 163 residues: Beta-carbonic anhydrase 1 (163 aa).

Zn(2+)-binding residues include Cys-35, Asp-37, His-88, and Cys-91.

Belongs to the beta-class carbonic anhydrase family. Homotetramer. The cofactor is Zn(2+).

The enzyme catalyses hydrogencarbonate + H(+) = CO2 + H2O. In terms of biological role, catalyzes the reversible hydration of carbon dioxide to form bicarbonate. This Mycobacterium bovis (strain ATCC BAA-935 / AF2122/97) protein is Beta-carbonic anhydrase 1.